We begin with the raw amino-acid sequence, 435 residues long: NADH-quinone oxidoreductase subunit D (435 aa).

Belongs to the complex I 49 kDa subunit family. In terms of assembly, NDH-1 is composed of 14 different subunits. Subunits NuoB, C, D, E, F, and G constitute the peripheral sector of the complex.

It localises to the cell inner membrane. It catalyses the reaction a quinone + NADH + 5 H(+)(in) = a quinol + NAD(+) + 4 H(+)(out). In terms of biological role, NDH-1 shuttles electrons from NADH, via FMN and iron-sulfur (Fe-S) centers, to quinones in the respiratory chain. The immediate electron acceptor for the enzyme in this species is believed to be ubiquinone. Couples the redox reaction to proton translocation (for every two electrons transferred, four hydrogen ions are translocated across the cytoplasmic membrane), and thus conserves the redox energy in a proton gradient. The sequence is that of NADH-quinone oxidoreductase subunit D from Xylella fastidiosa (strain 9a5c).